We begin with the raw amino-acid sequence, 445 residues long: FAS-associated factor 2-B (445 aa).

The UBA domain maps to 12–48; that stretch reads DQTEKLLQFQDLTGIESIDQCRQTLQQHNWNIETAVQ. Residues 275–353 are a coiled coil; the sequence is SERLEREERN…ERKSECLPAE (79 aa). Residues 302-355 are disordered; the sequence is RADQEKERKKKEKQDQKRREEEEAQRKQMLEERKKRNLEEEKERKSECLPAEPV. The span at 303–348 shows a compositional bias: basic and acidic residues; the sequence is ADQEKERKKKEKQDQKRREEEEAQRKQMLEERKKRNLEEEKERKSE. A UBX domain is found at 357 to 439; sequence DHPDNVKIIF…GLSQSQLLFV (83 aa).

It is found in the cytoplasm. The protein resides in the lipid droplet. It localises to the endoplasmic reticulum. In terms of biological role, plays an important role in endoplasmic reticulum-associated degradation (ERAD) that mediates ubiquitin-dependent degradation of misfolded endoplasmic reticulum proteins. Involved in inhibition of lipid droplet degradation. Involved in stress granule disassembly. The polypeptide is FAS-associated factor 2-B (faf2-b) (Xenopus laevis (African clawed frog)).